The following is an 81-amino-acid chain: Protein RALF-like 7 (81 aa).

The N-terminal stretch at methionine 1–glycine 29 is a signal peptide. Disulfide bonds link cysteine 46–cysteine 54 and cysteine 66–cysteine 72.

The protein belongs to the plant rapid alkalinization factor (RALF) family.

It localises to the secreted. In terms of biological role, cell signaling peptide that may regulate plant stress, growth, and development. Mediates a rapid alkalinization of extracellular space by mediating a transient increase in the cytoplasmic Ca(2+) concentration leading to a calcium-dependent signaling events through a cell surface receptor and a concomitant activation of some intracellular mitogen-activated protein kinases. This Arabidopsis thaliana (Mouse-ear cress) protein is Protein RALF-like 7 (RALFL7).